Here is a 953-residue protein sequence, read N- to C-terminus: TPR repeat-containing protein ZIP4 (953 aa).

The stretch at Ala-129–Ala-162 is one TPR 1 repeat. Positions Ala-248–Pro-269 are disordered. TPR repeat units follow at residues His-432–Asp-465 and Ala-473–Ile-506. Positions Val-925–Val-953 are disordered. A compositionally biased stretch (polar residues) spans Ile-943–Val-953.

In terms of assembly, interacts with HEI10 and SHOC1.

It localises to the nucleus. Its subcellular location is the chromosome. Its function is as follows. Required for crossover formation, complete synapsis of homologous chromosomes and bivalent formation during meiosis. Is specific to recombination events resulting in interference-sensitive crossovers (class I meiotic crossover) and works cooperatively with MER3 to promote crossovers. The chain is TPR repeat-containing protein ZIP4 from Oryza sativa subsp. japonica (Rice).